Here is a 979-residue protein sequence, read N- to C-terminus: Glutamate receptor ionotropic, kainate 5 (979 aa).

The first 14 residues, 1-14 (MPAELLLLLIVAFA), serve as a signal peptide directing secretion. Over 15–544 (NPSCQVLSSL…YFSFLDPFSP (530 aa)) the chain is Extracellular. Disulfide bonds link C36–C292, C83–C334, and C165–C170. N219, N271, N285, N322, N372, N394, N400, N407, N414, and N478 each carry an N-linked (GlcNAc...) asparagine glycan. The helical transmembrane segment at 545 to 565 (AVWLFMLLAYLAVSCVLFLAA) threads the bilayer. At 566 to 622 (RLSPYEWYNPHPCLRARPHILENQYTLGNSLWFPVGGFMQQGSEIMPRALSTRCVSG) the chain is on the cytoplasmic side. The helical transmembrane segment at 623–643 (VWWAFTLIIISSYTANLAAFL) threads the bilayer. The Extracellular portion of the chain corresponds to 644–803 (TVQRMEVPVE…HRAKGLGMEN (160 aa)). N-linked (GlcNAc...) asparagine glycosylation occurs at N735. The helical transmembrane segment at 804–824 (IGGIFVVLICGLIIAVFVAVM) threads the bilayer. Over 825–979 (EFIWSTRRSA…TGPRELTEHE (155 aa)) the chain is Cytoplasmic. A compositionally biased stretch (basic residues) spans 856–867 (RKTSRSRRRRRP). Disordered regions lie at residues 856–875 (RKTS…RALL), 890–925 (LYSA…APTP), and 942–979 (RASG…TEHE). Gly residues predominate over residues 894–903 (GAGGDAGAHG). Residues 912 to 923 (PGPPGGPRPQAP) are compositionally biased toward pro residues.

It belongs to the glutamate-gated ion channel (TC 1.A.10.1) family. GRIK5 subfamily. As to quaternary structure, homotetramer. Heterotetramer with GRIK2. Can form functional heteromeric receptors with GRIK1, GRIK2 and GRIK3. Forms a heteromeric complex with GRIK2. Expressed in the hippocampal mossy fiber synapses (at protein level).

The protein resides in the cell membrane. The protein localises to the postsynaptic cell membrane. It is found in the presynaptic cell membrane. In terms of biological role, ionotropic glutamate receptor that functions as a cation-permeable ligand-gated ion channel, gated by L-glutamate and the glutamatergic agonist kainic acid. Cannot form functional channels on its own and produces channel activity only in heteromeric assembly with GRIK2 subunit. Can form functional heteromeric receptors with GRIK1 and GRIK3. The chain is Glutamate receptor ionotropic, kainate 5 (Grik5) from Mus musculus (Mouse).